Consider the following 492-residue polypeptide: Probable malate:quinone oxidoreductase (492 aa).

Belongs to the MQO family. Requires FAD as cofactor.

It carries out the reaction (S)-malate + a quinone = a quinol + oxaloacetate. The protein operates within carbohydrate metabolism; tricarboxylic acid cycle; oxaloacetate from (S)-malate (quinone route): step 1/1. This is Probable malate:quinone oxidoreductase from Methylobacillus flagellatus (strain ATCC 51484 / DSM 6875 / VKM B-1610 / KT).